Here is a 307-residue protein sequence, read N- to C-terminus: Leucine-rich repeat-containing protein 59 (307 aa).

Met1 carries the N-acetylmethionine modification. Residue Thr2 is modified to N-acetylthreonine; in Leucine-rich repeat-containing protein 59, N-terminally processed. Residues 2–244 (TKAGSKGGNL…KPPPRKHTRS (243 aa)) lie on the Cytoplasmic side of the membrane. LRR repeat units follow at residues 10 to 31 (NLRD…NEVP), 40 to 62 (KATV…CGLT), 63 to 84 (HLVK…FGRL), 86 to 107 (NLQH…FAQL), and 109 to 128 (NLKW…AKVA). Residues Ser23 and Ser25 each carry the phosphoserine modification. At Lys73 the chain carries N6-succinyllysine. The residue at position 135 (Lys135) is an N6-acetyllysine. Positions 148 to 216 (MKAVQADQER…KASKREQEKK (69 aa)) form a coiled coil. Residues 150-241 (AVQADQERER…RPRKPPPRKH (92 aa)) form a disordered region. Residues 154–221 (DQERERQRRL…EQEKKPKKEA (68 aa)) are compositionally biased toward basic and acidic residues. Positions 229-241 (SGSRPRKPPPRKH) are enriched in basic residues. Residues 245–265 (WAVLKVLLLLLLLCVAGGLVV) form a helical membrane-spanning segment. The Lumenal segment spans residues 266 to 307 (CRVTGLHQQPLCTSVNTIYDNAVQGLRHHEILQWVLQTDSQQ).

In terms of assembly, can form homodimers. Interacts with SGO1. Interacts with FGF1.

The protein resides in the microsome membrane. The protein localises to the endoplasmic reticulum membrane. It is found in the nucleus envelope. Its function is as follows. Required for nuclear import of FGF1, but not that of FGF2. Might regulate nuclear import of exogenous FGF1 by facilitating interaction with the nuclear import machinery and by transporting cytosolic FGF1 to, and possibly through, the nuclear pores. The polypeptide is Leucine-rich repeat-containing protein 59 (Lrrc59) (Mus musculus (Mouse)).